Here is a 358-residue protein sequence, read N- to C-terminus: BAG family molecular chaperone regulator 1 (358 aa).

Basic and acidic residues-rich tracts occupy residues 1 to 14 (MADRGGARRPRGDQ), 26 to 39 (SARETRQSESRAER), and 85 to 94 (KVAHSKELTR). Residues 1–113 (MADRGGARRP…VTGTQEATQV (113 aa)) form a disordered region. 7 repeat units span residues 102-111 (KKVTGTQEAT), 114-119 (EEVTTI), 120-125 (EEATQT), 126-131 (EEITVA), 132-137 (EEVTQT), 144-149 (EEMVQT), and 150-155 (EEMEPP). Residues 114 to 212 (EEVTTIEEAT…LIFKGKSLKE (99 aa)) form a 7 X 6 AA tandem repeat of E-E-X(4) region. The Ubiquitin-like domain occupies 157–237 (LSVVVTHSNE…VMLIGEKSNP (81 aa)). Residues 185–232 (DLAQLVEEATGVPLPFQKLIFKGKSLKEMETPLSALGMQNGCRVMLIG) are interaction with HSPA8. An interaction with PPP1R15A region spans residues 229 to 358 (MLIGEKSNPE…LQSTNLALPE (130 aa)). Residues 259-339 (HLEELNKELS…VFLAECDTVE (81 aa)) form the BAG domain.

Homodimer. Forms a heteromeric complex with HSP70/HSC70. Binds to the ATPase domain of HSP/HSC70 chaperones. Interacts with NR3C1. Interacts with the N-terminal region of MAPRE2. Interacts with PPP1R15A. Interacts with BCL2 in an ATP-dependent manner. Interacts with SIAH1, SIAH2, HSPA8 (via NBD), HSPA1A (via NBD) and HSPA1B (via NBD). Interacts with ESR1; the interaction is promoted in the absence of estradiol (17-beta-estradiol/E2). Ubiquitinated; mediated by SIAH1 or SIAH2 and leading to its subsequent proteasomal degradation. As to expression, expressed in the CA1 region of the hippocampus (at protein level). Expressed in the uterus (at protein level).

The protein resides in the nucleus. It localises to the cytoplasm. Co-chaperone for HSP70 and HSC70 chaperone proteins. Acts as a nucleotide-exchange factor (NEF) promoting the release of ADP from the HSP70 and HSC70 proteins thereby triggering client/substrate protein release. Nucleotide release is mediated via its binding to the nucleotide-binding domain (NBD) of HSPA8/HSC70 where as the substrate release is mediated via its binding to the substrate-binding domain (SBD) of HSPA8/HSC70. Inhibits the pro-apoptotic function of PPP1R15A, and has anti-apoptotic activity. Markedly increases the anti-cell death function of BCL2 induced by various stimuli. Involved in the STUB1-mediated proteasomal degradation of ESR1 in response to age-related circulating estradiol (17-beta-estradiol/E2) decline, thereby promotes neuronal apoptosis in response to ischemic reperfusion injury. The chain is BAG family molecular chaperone regulator 1 (Bag1) from Rattus norvegicus (Rat).